Here is a 258-residue protein sequence, read N- to C-terminus: Regulatory protein RecX (258 aa).

This sequence belongs to the RecX family.

It is found in the cytoplasm. Modulates RecA activity. The polypeptide is Regulatory protein RecX (Streptococcus thermophilus (strain ATCC BAA-491 / LMD-9)).